The following is a 128-amino-acid chain: MPTINQLIRKGREPKERKSKSPALMGNPQKRGVCIRVTTMTPKKPNSALRKVARVRLTNGIEVWAYIPGIGHNLQEHSVVLVRGGRVKDLPGVRYHIIRGALDAAGVEGRRQGRSKYGAKRPKEGGKK.

A disordered region spans residues 1–29 (MPTINQLIRKGREPKERKSKSPALMGNPQ). 3-methylthioaspartic acid is present on aspartate 89. Residues 106 to 128 (GVEGRRQGRSKYGAKRPKEGGKK) are disordered.

Belongs to the universal ribosomal protein uS12 family. Part of the 30S ribosomal subunit. Contacts proteins S8 and S17. May interact with IF1 in the 30S initiation complex.

Functionally, with S4 and S5 plays an important role in translational accuracy. In terms of biological role, interacts with and stabilizes bases of the 16S rRNA that are involved in tRNA selection in the A site and with the mRNA backbone. Located at the interface of the 30S and 50S subunits, it traverses the body of the 30S subunit contacting proteins on the other side and probably holding the rRNA structure together. The combined cluster of proteins S8, S12 and S17 appears to hold together the shoulder and platform of the 30S subunit. This Dictyoglomus turgidum (strain DSM 6724 / Z-1310) protein is Small ribosomal subunit protein uS12.